The sequence spans 424 residues: MGLPQNKLSFFCFFFLVSVLTLAPLAFSEIFLEEHFEGGWKSRWVLSDWKRNEGKAGTFKHTAGKWPGDPDNKGIQTYNDAKHYAISAKIPEFSNKNRTLVVQYSVKIEQDIECGGAYIKLLSGYVNQKQFGGDTPYSLMFGPDICGTQTKKLHVIVSYQGQNYPIKKDLQCETDKLNHFYTFILRPDASYSVLVDNKEREFGSMYTDWDILPPRKIKVKNAKKPEDWDDREYIDDPNDVKPEGFDSIPREIPDRKAKEPEDWDEEENGLWEPPKIPNSAYKGPWKAKRIKNPNYKGKWKNPWIDNPEFEDDPDLYVLKSIKYAGIEVWQVKAGSIFDNILICDDPAYARSIVDDYFAQHRESEKELFAEAEKERKAREDEEARIAREEGERRRKERDHRYGDRRRRYKRPNPRDYMDDYHDEL.

The N-terminal stretch at 1-28 (MGLPQNKLSFFCFFFLVSVLTLAPLAFS) is a signal peptide. An N-linked (GlcNAc...) asparagine glycan is attached at asparagine 97. Residues cysteine 114 and cysteine 146 are joined by a disulfide bond. Residues tyrosine 118, lysine 120, tyrosine 137, and aspartate 144 each contribute to the an alpha-D-glucoside site. Tandem repeats lie at residues 200–211 (REFGSMYTDWDI), 219–230 (VKNAKKPEDWDD), 236–247 (DPNDVKPEGFDS), 254–265 (DRKAKEPEDWDE), 269–279 (GLWEPPKIPNS), 283–293 (GPWKAKRIKNP), and 297–307 (GKWKNPWIDNP). The interval 200–265 (REFGSMYTDW…KAKEPEDWDE (66 aa)) is 4 X approximate repeats. The span at 228 to 237 (WDDREYIDDP) shows a compositional bias: acidic residues. The segment at 228–275 (WDDREYIDDPNDVKPEGFDSIPREIPDRKAKEPEDWDEEENGLWEPPK) is disordered. Residues 238–260 (NDVKPEGFDSIPREIPDRKAKEP) are compositionally biased toward basic and acidic residues. Residues 269 to 307 (GLWEPPKIPNSAYKGPWKAKRIKNPNYKGKWKNPWIDNP) are 3 X approximate repeats. Glutamate 327 serves as a coordination point for an alpha-D-glucoside. Residues 368-401 (FAEAEKERKAREDEEARIAREEGERRRKERDHRY) show a composition bias toward basic and acidic residues. The segment at 368-424 (FAEAEKERKAREDEEARIAREEGERRRKERDHRYGDRRRRYKRPNPRDYMDDYHDEL) is disordered. Residues 402 to 411 (GDRRRRYKRP) show a composition bias toward basic residues. Residues 412-424 (NPRDYMDDYHDEL) show a composition bias toward basic and acidic residues. The Prevents secretion from ER signature appears at 421 to 424 (HDEL).

The protein belongs to the calreticulin family.

The protein resides in the endoplasmic reticulum lumen. Its function is as follows. Molecular calcium-binding chaperone promoting folding, oligomeric assembly and quality control in the ER via the calreticulin/calnexin cycle. This lectin may interact transiently with almost all of the monoglucosylated glycoproteins that are synthesized in the ER. Required for elongation factor Tu receptor (EFR) accumulation and for EFR, but not flagellin-sensing 2 (FLS2) signaling. The polypeptide is Calreticulin-3 (CRT3) (Arabidopsis thaliana (Mouse-ear cress)).